The chain runs to 254 residues: 5-oxoprolinase subunit A (254 aa).

Belongs to the LamB/PxpA family. As to quaternary structure, forms a complex composed of PxpA, PxpB and PxpC.

It carries out the reaction 5-oxo-L-proline + ATP + 2 H2O = L-glutamate + ADP + phosphate + H(+). Its function is as follows. Catalyzes the cleavage of 5-oxoproline to form L-glutamate coupled to the hydrolysis of ATP to ADP and inorganic phosphate. The chain is 5-oxoprolinase subunit A from Burkholderia thailandensis (strain ATCC 700388 / DSM 13276 / CCUG 48851 / CIP 106301 / E264).